Here is a 103-residue protein sequence, read N- to C-terminus: Small ribosomal subunit protein uS10 (103 aa).

The protein belongs to the universal ribosomal protein uS10 family. In terms of assembly, part of the 30S ribosomal subunit.

Its function is as follows. Involved in the binding of tRNA to the ribosomes. This Chlorobium chlorochromatii (strain CaD3) protein is Small ribosomal subunit protein uS10.